We begin with the raw amino-acid sequence, 1977 residues long: Echinoderm microtubule-associated protein-like 5 (1977 aa).

11 WD repeats span residues 59 to 100 (GHSD…TVSV), 104 to 145 (VHTH…MLSM), 148 to 187 (GHTD…LTPK), 195 to 233 (GDLQ…RTIQ), 235 to 273 (AHTA…TVID), 280 to 321 (GYKG…LIMQ), 323 to 362 (HCEG…LIAR), 364 to 403 (NMDE…EVVH), 406 to 445 (DRKE…KKVG), 449 to 488 (GSLS…EVTS), and 561 to 601 (GHSA…KLKD). Residues 609–629 (ESLTESNSDESDSDLSDVPEL) form a disordered region. The span at 615–629 (NSDESDSDLSDVPEL) shows a compositional bias: acidic residues. WD repeat units follow at residues 725–766 (GHDD…PLSI), 770–811 (YHQY…KLSV), 814–853 (GSKD…LIGR), 861–900 (GKND…KTVK), 901–940 (AHDG…KTYA), 996–1035 (HMEG…CMLA), 1038–1077 (KLKK…DLVS), 1080–1120 (HRKD…RVGV), and 1236–1276 (AHST…HREK). Disordered stretches follow at residues 1274-1299 (REKK…SDVT) and 1323-1363 (PHLQ…NVGK). Acidic residues predominate over residues 1281-1294 (SEESDTDSEEDGGY). Basic and acidic residues predominate over residues 1326–1337 (QQKEPSVDERQG). WD repeat units follow at residues 1420–1471 (EHND…TLSI), 1475–1516 (SHSK…KIAS), 1519–1558 (GHNQ…LLSK), 1568–1606 (ARMQ…RVVA), 1608–1654 (AHNG…RAFR), 1699–1739 (GHVD…MLNK), 1741–1782 (NLGH…GKKR), 1783–1822 (DRRC…TLNR), 1895–1934 (AEKA…KFAK), and 1940–1977 (GHSP…HTPH).

Belongs to the WD repeat EMAP family. As to expression, highly expressed in brain, especially in hippocampus, cerebellum and olfactory bulb (at protein level).

Its subcellular location is the cytoplasm. It is found in the cytoskeleton. May modify the assembly dynamics of microtubules, such that microtubules are slightly longer, but more dynamic. This chain is Echinoderm microtubule-associated protein-like 5 (Eml5), found in Rattus norvegicus (Rat).